Consider the following 384-residue polypeptide: tRNA-specific 2-thiouridylase MnmA (384 aa).

ATP-binding positions include 9–16 and methionine 35; that span reads GMSGGVDS. Residues 95–97 form an interaction with target base in tRNA region; the sequence is NPD. Cysteine 100 serves as the catalytic Nucleophile. A disulfide bond links cysteine 100 and cysteine 196. Glycine 124 provides a ligand contact to ATP. The interaction with tRNA stretch occupies residues 146–148; the sequence is KDQ. Residue cysteine 196 is the Cysteine persulfide intermediate of the active site. The tract at residues 308 to 309 is interaction with tRNA; that stretch reads RY.

The protein belongs to the MnmA/TRMU family.

Its subcellular location is the cytoplasm. It carries out the reaction S-sulfanyl-L-cysteinyl-[protein] + uridine(34) in tRNA + AH2 + ATP = 2-thiouridine(34) in tRNA + L-cysteinyl-[protein] + A + AMP + diphosphate + H(+). Its function is as follows. Catalyzes the 2-thiolation of uridine at the wobble position (U34) of tRNA, leading to the formation of s(2)U34. The sequence is that of tRNA-specific 2-thiouridylase MnmA from Burkholderia ambifaria (strain ATCC BAA-244 / DSM 16087 / CCUG 44356 / LMG 19182 / AMMD) (Burkholderia cepacia (strain AMMD)).